A 350-amino-acid chain; its full sequence is MFASLLLAALPLLTHAALTYRGADISSLLLLEDEGYSYKNLNGQTQALETILADAGINSIRQRVWVNPSDGSYDLDYNLELAKRVKAAGMSLYLDLHLSDTWADPSDQTTPSGWSTTDLGTLKWQLYNYTLEVCNTFAENDIDIEIISIGNEIRAGLLWPLGETSSYSNIGALLHSGAWGVKDSNLATTPKIMIHLDDGWSWDQQNYFYETVLATGELLSTDFDYFGVSYYPFYSASATLASLKTSLANLQSTYDKPVVVVETNWPVSCPNPAYAFPSDLSSIPFSVAGQQEFLEKLAAVVEATTDGLGVYYWEPAWIGNAGLGSSCADNLMVDYTTDEVYESIETLGEL.

The N-terminal stretch at 1–16 (MFASLLLAALPLLTHA) is a signal peptide. N-linked (GlcNAc...) asparagine glycosylation is present at asparagine 128. Glutamate 152 serves as the catalytic Proton donor. Catalysis depends on glutamate 262, which acts as the Nucleophile.

The protein belongs to the glycosyl hydrolase 53 family. Glycosylated.

It carries out the reaction The enzyme specifically hydrolyzes (1-&gt;4)-beta-D-galactosidic linkages in type I arabinogalactans.. This is Arabinogalactan endo-beta-1,4-galactanase (gal1) from Aspergillus aculeatus.